The following is a 151-amino-acid chain: 3-hydroxyacyl-[acyl-carrier-protein] dehydratase FabZ (151 aa).

Histidine 49 is a catalytic residue.

Belongs to the thioester dehydratase family. FabZ subfamily.

It is found in the cytoplasm. It catalyses the reaction a (3R)-hydroxyacyl-[ACP] = a (2E)-enoyl-[ACP] + H2O. Its function is as follows. Involved in unsaturated fatty acids biosynthesis. Catalyzes the dehydration of short chain beta-hydroxyacyl-ACPs and long chain saturated and unsaturated beta-hydroxyacyl-ACPs. This chain is 3-hydroxyacyl-[acyl-carrier-protein] dehydratase FabZ, found in Bordetella bronchiseptica (strain ATCC BAA-588 / NCTC 13252 / RB50) (Alcaligenes bronchisepticus).